Consider the following 396-residue polypeptide: Stearoyl-[acyl-carrier-protein] 9-desaturase 2, chloroplastic (396 aa).

The N-terminal 32 residues, 1–32 (MALRPNDVTLRLTPPLAAAARRNRRAAAGGVR), are a transit peptide targeting the chloroplast. 6 residues coordinate Fe cation: E138, E176, H179, E229, E262, and H265.

This sequence belongs to the fatty acid desaturase type 2 family. As to quaternary structure, homodimer. Requires Fe(2+) as cofactor.

The protein localises to the plastid. It localises to the chloroplast. It catalyses the reaction octadecanoyl-[ACP] + 2 reduced [2Fe-2S]-[ferredoxin] + O2 + 2 H(+) = (9Z)-octadecenoyl-[ACP] + 2 oxidized [2Fe-2S]-[ferredoxin] + 2 H2O. The protein operates within lipid metabolism; fatty acid metabolism. In terms of biological role, converts stearoyl-ACP to oleoyl-ACP by introduction of a cis double bond between carbons 9 and 10 of the acyl chain. Required for the repression of the salicylic acid (SA) signaling pathway. This chain is Stearoyl-[acyl-carrier-protein] 9-desaturase 2, chloroplastic (SSI2), found in Oryza sativa subsp. indica (Rice).